The following is a 272-amino-acid chain: 2-succinyl-6-hydroxy-2,4-cyclohexadiene-1-carboxylate synthase (272 aa).

The protein belongs to the AB hydrolase superfamily. MenH family. Monomer.

The enzyme catalyses 5-enolpyruvoyl-6-hydroxy-2-succinyl-cyclohex-3-ene-1-carboxylate = (1R,6R)-6-hydroxy-2-succinyl-cyclohexa-2,4-diene-1-carboxylate + pyruvate. Its pathway is quinol/quinone metabolism; 1,4-dihydroxy-2-naphthoate biosynthesis; 1,4-dihydroxy-2-naphthoate from chorismate: step 3/7. The protein operates within quinol/quinone metabolism; menaquinone biosynthesis. Functionally, catalyzes a proton abstraction reaction that results in 2,5-elimination of pyruvate from 2-succinyl-5-enolpyruvyl-6-hydroxy-3-cyclohexene-1-carboxylate (SEPHCHC) and the formation of 2-succinyl-6-hydroxy-2,4-cyclohexadiene-1-carboxylate (SHCHC). The sequence is that of 2-succinyl-6-hydroxy-2,4-cyclohexadiene-1-carboxylate synthase from Yersinia pestis (strain Pestoides F).